A 199-amino-acid chain; its full sequence is MACNAPNQRQRTLSTSGESLYEILGLHKGASCEEIKKTYRKLALRHHPDKNPDDPSAAEKFKEINNAHTILTDTSKRNIYDKYGSLGLYVAEQFGDENVNTYFMLSSWWAKTLFIIIGLLTGCYFCCCLCCCCNCCCGHCRPKSSTPEEEFYVSPEDLEEQIRTDMEKDMDFPVVLQPTNTNEKTQLIREGSRSYCTDS.

Phosphoserine occurs at positions 14 and 16. One can recognise a J domain in the interval 19-84; it reads SLYEILGLHK…SKRNIYDKYG (66 aa).

In terms of assembly, interacts with the chaperone complex consisting of HSC70 and SGTA. In terms of processing, palmitoylated.

The protein resides in the membrane. In Mus musculus (Mouse), this protein is DnaJ homolog subfamily C member 5B (Dnajc5b).